Reading from the N-terminus, the 73-residue chain is Ocellatin-PT6 (73 aa).

The signal sequence occupies residues Met1 to Cys22. A propeptide spanning residues Asp23–Glu39 is cleaved from the precursor.

As to expression, expressed by the skin glands.

Its subcellular location is the secreted. Functionally, has antibacterial activity against Gram-negative bacterium E.coli ATCC 25922 (MIC=120 uM) but not against S.pneumoniae ATCC 700603, S.choleraesuis ATCC 14028 or against Gram-positive bacterium S.aureus ATCC 29313. Shows no hemolytic activity and no cytotoxicity. This Leptodactylus pustulatus (Ceara white-lipped frog) protein is Ocellatin-PT6.